Reading from the N-terminus, the 100-residue chain is Aspartyl/glutamyl-tRNA(Asn/Gln) amidotransferase subunit C (100 aa).

It belongs to the GatC family. As to quaternary structure, heterotrimer of A, B and C subunits.

The enzyme catalyses L-glutamyl-tRNA(Gln) + L-glutamine + ATP + H2O = L-glutaminyl-tRNA(Gln) + L-glutamate + ADP + phosphate + H(+). It catalyses the reaction L-aspartyl-tRNA(Asn) + L-glutamine + ATP + H2O = L-asparaginyl-tRNA(Asn) + L-glutamate + ADP + phosphate + 2 H(+). Allows the formation of correctly charged Asn-tRNA(Asn) or Gln-tRNA(Gln) through the transamidation of misacylated Asp-tRNA(Asn) or Glu-tRNA(Gln) in organisms which lack either or both of asparaginyl-tRNA or glutaminyl-tRNA synthetases. The reaction takes place in the presence of glutamine and ATP through an activated phospho-Asp-tRNA(Asn) or phospho-Glu-tRNA(Gln). This chain is Aspartyl/glutamyl-tRNA(Asn/Gln) amidotransferase subunit C, found in Streptococcus uberis (strain ATCC BAA-854 / 0140J).